Consider the following 70-residue polypeptide: Small ribosomal subunit protein bS21 (70 aa).

Residues Lys48–Arg61 show a composition bias toward basic residues. The segment at Lys48–Tyr70 is disordered.

This sequence belongs to the bacterial ribosomal protein bS21 family.

This is Small ribosomal subunit protein bS21 from Thiobacillus denitrificans (strain ATCC 25259 / T1).